The chain runs to 422 residues: 5'-deoxyadenosine deaminase (422 aa).

2 residues coordinate Zn(2+): His-57 and His-59. Substrate-binding residues include Glu-86 and His-178. Position 205 (His-205) interacts with Zn(2+). Glu-208 and Asp-294 together coordinate substrate. Asp-294 is a binding site for Zn(2+).

This sequence belongs to the metallo-dependent hydrolases superfamily. MTA/SAH deaminase family. In terms of assembly, homotetramer. Requires Zn(2+) as cofactor.

It carries out the reaction 5'-deoxyadenosine + H2O + H(+) = 5'-deoxyinosine + NH4(+). The enzyme catalyses S-adenosyl-L-homocysteine + H2O + H(+) = S-inosyl-L-homocysteine + NH4(+). The catalysed reaction is S-methyl-5'-thioadenosine + H2O + H(+) = S-methyl-5'-thioinosine + NH4(+). It catalyses the reaction adenosine + H2O + H(+) = inosine + NH4(+). It functions in the pathway amino-acid biosynthesis; S-adenosyl-L-methionine biosynthesis. Its function is as follows. Catalyzes the deamination of three SAM-derived enzymatic products, namely 5'-deoxyadenosine, S-adenosyl-L-homocysteine, and 5'-methylthioadenosine, to produce the inosine analogs. Can also deaminate adenosine. The preferred substrate for this enzyme is 5'-deoxyadenosine, but all these substrates are efficiently deaminated. Likely functions in a S-adenosyl-L-methionine (SAM) recycling pathway from S-adenosyl-L-homocysteine (SAH) produced from SAM-dependent methylation reactions. May also be involved in the recycling of 5'-deoxyadenosine, whereupon the 5'-deoxyribose moiety of 5'-deoxyinosine is further metabolized to deoxyhexoses used for the biosynthesis of aromatic amino acids in methanogens. This chain is 5'-deoxyadenosine deaminase, found in Methanococcus maripaludis (strain C6 / ATCC BAA-1332).